Consider the following 366-residue polypeptide: Chorismate synthase (366 aa).

An NADP(+)-binding site is contributed by R48. Residues 131 to 133, 243 to 244, G288, 303 to 307, and R329 each bind FMN; these read RAS, NA, and KPTSS.

Belongs to the chorismate synthase family. In terms of assembly, homotetramer. The cofactor is FMNH2.

The catalysed reaction is 5-O-(1-carboxyvinyl)-3-phosphoshikimate = chorismate + phosphate. Its pathway is metabolic intermediate biosynthesis; chorismate biosynthesis; chorismate from D-erythrose 4-phosphate and phosphoenolpyruvate: step 7/7. Catalyzes the anti-1,4-elimination of the C-3 phosphate and the C-6 proR hydrogen from 5-enolpyruvylshikimate-3-phosphate (EPSP) to yield chorismate, which is the branch point compound that serves as the starting substrate for the three terminal pathways of aromatic amino acid biosynthesis. This reaction introduces a second double bond into the aromatic ring system. The chain is Chorismate synthase from Bartonella henselae (strain ATCC 49882 / DSM 28221 / CCUG 30454 / Houston 1) (Rochalimaea henselae).